Here is a 237-residue protein sequence, read N- to C-terminus: uncharacterized protein (237 aa).

This is an uncharacterized protein from Dictyostelium discoideum (Social amoeba).